We begin with the raw amino-acid sequence, 261 residues long: Transmembrane protein 106A (261 aa).

The segment at 1-23 is disordered; it reads MGKAVSQLTSRKDEDKPILPDNP. Residues 93–113 form a helical membrane-spanning segment; the sequence is LFVFLSVAICLLIFSLTIFFL.

The protein belongs to the TMEM106 family. As to expression, expressed in liver, spleen, lung, kidney, lymph nodes and adipose tissue (at protein level). Expressed by macrophages.

It localises to the cell membrane. Activates macrophages and polarizes them into M1-like macrophages through the activation of the MAPK and NF-kappaB signaling pathway. Upon activation, up-regulates the expression of CD80, CD86, CD69 and MHC II on macrophages, and induces the release of pro-inflammatory cytokines such as TNF, IL1B, IL6, CCL2 and nitric oxide. May play a role in inhibition of proliferation and migration. The protein is Transmembrane protein 106A (Tmem106a) of Mus musculus (Mouse).